Here is a 400-residue protein sequence, read N- to C-terminus: Argininosuccinate synthase (400 aa).

8–16 (AYSGGLDTS) lines the ATP pocket. Residues Y86 and S91 each contribute to the L-citrulline site. G116 contacts ATP. L-aspartate-binding residues include T118, N122, and D123. Residue N122 participates in L-citrulline binding. Residues R126, S175, S184, E260, and Y272 each coordinate L-citrulline.

Belongs to the argininosuccinate synthase family. Type 1 subfamily. Homotetramer.

The protein localises to the cytoplasm. It catalyses the reaction L-citrulline + L-aspartate + ATP = 2-(N(omega)-L-arginino)succinate + AMP + diphosphate + H(+). It functions in the pathway amino-acid biosynthesis; L-arginine biosynthesis; L-arginine from L-ornithine and carbamoyl phosphate: step 2/3. The polypeptide is Argininosuccinate synthase (Clostridium acetobutylicum (strain ATCC 824 / DSM 792 / JCM 1419 / IAM 19013 / LMG 5710 / NBRC 13948 / NRRL B-527 / VKM B-1787 / 2291 / W)).